The chain runs to 431 residues: Glucose-1-phosphate adenylyltransferase (431 aa).

K39 contributes to the beta-D-fructose 1,6-bisphosphate binding site. R40, H46, and R52 together coordinate AMP. Position 114 (Y114) interacts with alpha-D-glucose 1-phosphate. R130 is an AMP binding site. Alpha-D-glucose 1-phosphate-binding positions include G179, 194 to 195 (EK), and S212. R386 serves as a coordination point for AMP. 429-431 (QER) contacts beta-D-fructose 1,6-bisphosphate.

Belongs to the bacterial/plant glucose-1-phosphate adenylyltransferase family. As to quaternary structure, homotetramer.

It catalyses the reaction alpha-D-glucose 1-phosphate + ATP + H(+) = ADP-alpha-D-glucose + diphosphate. Its pathway is glycan biosynthesis; glycogen biosynthesis. Allosterically activated by fructose-1,6-bisphosphate (F16BP) and inhibited by AMP. Functionally, involved in the biosynthesis of ADP-glucose, a building block required for the elongation reactions to produce glycogen. Catalyzes the reaction between ATP and alpha-D-glucose 1-phosphate (G1P) to produce pyrophosphate and ADP-Glc. In Klebsiella pneumoniae subsp. pneumoniae (strain ATCC 700721 / MGH 78578), this protein is Glucose-1-phosphate adenylyltransferase.